We begin with the raw amino-acid sequence, 388 residues long: tRNA(Ile)-lysidine synthase (388 aa).

Residue 51-56 (SGGRDS) coordinates ATP.

It belongs to the tRNA(Ile)-lysidine synthase family.

The protein resides in the cytoplasm. It carries out the reaction cytidine(34) in tRNA(Ile2) + L-lysine + ATP = lysidine(34) in tRNA(Ile2) + AMP + diphosphate + H(+). Ligates lysine onto the cytidine present at position 34 of the AUA codon-specific tRNA(Ile) that contains the anticodon CAU, in an ATP-dependent manner. Cytidine is converted to lysidine, thus changing the amino acid specificity of the tRNA from methionine to isoleucine. The protein is tRNA(Ile)-lysidine synthase of Bifidobacterium longum (strain NCC 2705).